Consider the following 1138-residue polypeptide: MEKREAFIQAVSKELVEEFLQFLQLDKDSSNPFSLSELLDELSRKQKEELWQRLKDLLTETLLESPVDRWQTVEVEGADDMESEHSPKMRKSIKIICAIVTVILASVSIINEHENYGALLECAVILNGILYALPESEQKLQNSIQDLCVKWWERGLPAKEDMGKTAFIMLLRRSLETKSGADVCRLWRIHQALYCFDYDWEESREIKDMLLECFINVNYIKKEEGRRFLSFLFSWNVDFIKMIHETIKNQLAGLQKSLMVHIAEIYFRAWKKASGKMLETIEYDCIQDFMFHGIHLLRRSPVHSKVREVLSYFHQQKVRQGVEEMLYRLYKPILWRGLKARNSEVRSNAALLFVEAFPIRDPNFTATEMDNEIQKQFEELYNLIEDPYPRVRSTGILGVCKISSKYWEMMPPNILVDFLKKVTGELAFDISSADVRCSVFKCLPIILDNKLSHPLLEQLLPTLRYSLHDNSEKVRVAFVDLLLKIKAVRAAKFWKICPMEDILVRLEMDSRPVSRRLVSLIFNSFLPVNQPEEVWCERCVTLIQMNRAAARRFYQYAHEHTASTNIAKLIHVIRHCLNACIQRTLREGSEAHKECEKENASVLDKTLSVNDTASMAGLLEIIVILWKNIHRSLENNKEAKIYTINKFAAVLPEYLKVFKDERCKIPLFMLMSFLPASAVPVFSCGVISVLRNQESVTGRSYCTLLDCLCSWGQVGHVLELIVDWLPTVPPQAKSNLASKRKVEINDTCSVKPELALLYMEYLLTHPKNRECLLSVPQKKLNQLLKALEGSKAELESFLQSPSGNPLNFNKATALHAFGLYCRMSVHLQYKFCSEEKIHLSILDDTGSWLENKVLPLLEDQEEEYLKLRKDVYQQIIQTYLAVCKDVVMVGLGDPKFQMQLLQRSFGIMKTVKGFFYVSLLLGILKEIAGNTIIHKTDSDEKVTVLFDLVQEVFQKMLECIACIFRKQPEESLPLFHSVQTPLHEFITTIQSWHKDTAVHHAVLSTLIAAPVVEISHQLQKVSDIEELTSPQCLHDLPPFSRCLVGVIMKSSDVVRSFVDELKACVTSGDVEGIVCLTAVLHIILVINKGKHISAKVKEVATAVYRKLKTFMEITLEEDSLERFLYESSMRTLGEFLNP.

At Ser30 the chain carries Phosphoserine. Residues 459–497 form an HEAT repeat; sequence LLPTLRYSLHDNSEKVRVAFVDLLLKIKAVRAAKFWKIC. Thr1114 is modified (phosphothreonine).

As to quaternary structure, component of the condensin-2 complex, which contains the SMC2 and SMC4 heterodimer, and 3 non SMC subunits that probably regulate the complex: NCAPH2, NCAPD3 and NCAPG2. As to expression, expressed in spleen, lung and testis as well as in hematopoietic cell lines.

It is found in the nucleus. In terms of biological role, regulatory subunit of the condensin-2 complex, a complex which establishes mitotic chromosome architecture and is involved in physical rigidity of the chromatid axis. Is required for early embryonic development and is essential for viability and expansion of the inner cell mass (ICM) of the implanting blastocyst. In Mus musculus (Mouse), this protein is Condensin-2 complex subunit G2 (Ncapg2).